We begin with the raw amino-acid sequence, 440 residues long: Xaa-Pro dipeptidase (440 aa).

Asp244, Asp255, His335, Glu380, and Glu419 together coordinate Mn(2+).

The protein belongs to the peptidase M24B family. Bacterial-type prolidase subfamily. Mn(2+) is required as a cofactor.

It carries out the reaction Xaa-L-Pro dipeptide + H2O = an L-alpha-amino acid + L-proline. Splits dipeptides with a prolyl residue in the C-terminal position. This is Xaa-Pro dipeptidase from Shewanella halifaxensis (strain HAW-EB4).